The chain runs to 336 residues: Biotin synthase (336 aa).

Residues 54–281 (NAIQLSTLLS…KAMVRLSAGR (228 aa)) enclose the Radical SAM core domain. Residues Cys69, Cys73, and Cys76 each contribute to the [4Fe-4S] cluster site. Positions 113, 144, 204, and 276 each coordinate [2Fe-2S] cluster.

Belongs to the radical SAM superfamily. Biotin synthase family. In terms of assembly, homodimer. Requires [4Fe-4S] cluster as cofactor. [2Fe-2S] cluster serves as cofactor.

It carries out the reaction (4R,5S)-dethiobiotin + (sulfur carrier)-SH + 2 reduced [2Fe-2S]-[ferredoxin] + 2 S-adenosyl-L-methionine = (sulfur carrier)-H + biotin + 2 5'-deoxyadenosine + 2 L-methionine + 2 oxidized [2Fe-2S]-[ferredoxin]. Its pathway is cofactor biosynthesis; biotin biosynthesis; biotin from 7,8-diaminononanoate: step 2/2. Its function is as follows. Catalyzes the conversion of dethiobiotin (DTB) to biotin by the insertion of a sulfur atom into dethiobiotin via a radical-based mechanism. The polypeptide is Biotin synthase (Burkholderia thailandensis (strain ATCC 700388 / DSM 13276 / CCUG 48851 / CIP 106301 / E264)).